The chain runs to 317 residues: 1-phosphatidylinositol phosphodiesterase (317 aa).

A signal peptide spans 1-22 (MYKNYLQRTLVLLLCFILYFFT). The 139-residue stretch at 58–196 (LAALSIPGTH…LKDVRGKILL (139 aa)) folds into the PI-PLC X-box domain. The active-site Proton acceptor is His-67. Catalysis depends on His-115, which acts as the Proton donor.

As to quaternary structure, monomer.

It localises to the secreted. Its subcellular location is the cytoplasm. The enzyme catalyses a 1,2-diacyl-sn-glycero-3-phospho-(1D-myo-inositol) = 1D-myo-inositol 1,2-cyclic phosphate + a 1,2-diacyl-sn-glycerol. Functionally, cleaves glycosylphosphatidylinositol (GPI) and phosphatidylinositol (PI) anchors but not PI phosphates. Important factor in pathogenesis, PI-PLC activity is present only in virulent listeria species. It may participate in the lysis of the phagolysosomal membrane. The protein is 1-phosphatidylinositol phosphodiesterase (plcA) of Listeria monocytogenes serovar 1/2a (strain ATCC BAA-679 / EGD-e).